Reading from the N-terminus, the 291-residue chain is UDP-N-acetylenolpyruvoylglucosamine reductase (291 aa).

An FAD-binding PCMH-type domain is found at 19-186 (GIGGPAEWIA…VSARLKLASG (168 aa)). Residue arginine 165 is part of the active site. Serine 215 (proton donor) is an active-site residue. Glutamate 285 is an active-site residue.

It belongs to the MurB family. FAD is required as a cofactor.

The protein localises to the cytoplasm. It carries out the reaction UDP-N-acetyl-alpha-D-muramate + NADP(+) = UDP-N-acetyl-3-O-(1-carboxyvinyl)-alpha-D-glucosamine + NADPH + H(+). The protein operates within cell wall biogenesis; peptidoglycan biosynthesis. Cell wall formation. In Prochlorococcus marinus (strain NATL2A), this protein is UDP-N-acetylenolpyruvoylglucosamine reductase.